The chain runs to 476 residues: Chromosomal replication initiator protein DnaA (476 aa).

The segment at 1-87 is domain I, interacts with DnaA modulators; it reads MSESSHVGLW…LMYNVLVDKS (87 aa). The interval 87-130 is domain II; that stretch reads SSGATVNQESTTRSTAIPQSGLPRVDERKAPGLLRAPAVQDLDP. A domain III, AAA+ region region spans residues 131–348; sequence HLNPNYNFET…GIVISIMAHS (218 aa). Residues glycine 176, glycine 178, lysine 179, and threonine 180 each contribute to the ATP site. The domain IV, binds dsDNA stretch occupies residues 349-476; the sequence is TIYNKEIDLD…KKRNVSNGER (128 aa).

Belongs to the DnaA family. As to quaternary structure, oligomerizes as a right-handed, spiral filament on DNA at oriC.

The protein localises to the cytoplasm. Functionally, plays an essential role in the initiation and regulation of chromosomal replication. ATP-DnaA binds to the origin of replication (oriC) to initiate formation of the DNA replication initiation complex once per cell cycle. Binds the DnaA box (a 9 base pair repeat at the origin) and separates the double-stranded (ds)DNA. Forms a right-handed helical filament on oriC DNA; dsDNA binds to the exterior of the filament while single-stranded (ss)DNA is stabiized in the filament's interior. The ATP-DnaA-oriC complex binds and stabilizes one strand of the AT-rich DNA unwinding element (DUE), permitting loading of DNA polymerase. After initiation quickly degrades to an ADP-DnaA complex that is not apt for DNA replication. Binds acidic phospholipids. The protein is Chromosomal replication initiator protein DnaA of Bacteroides fragilis (strain YCH46).